We begin with the raw amino-acid sequence, 180 residues long: Large ribosomal subunit protein uL6 (180 aa).

It belongs to the universal ribosomal protein uL6 family. In terms of assembly, part of the 50S ribosomal subunit.

Functionally, this protein binds to the 23S rRNA, and is important in its secondary structure. It is located near the subunit interface in the base of the L7/L12 stalk, and near the tRNA binding site of the peptidyltransferase center. This Thermus thermophilus (strain ATCC BAA-163 / DSM 7039 / HB27) protein is Large ribosomal subunit protein uL6.